The following is a 358-amino-acid chain: 3-dehydroquinate synthase (358 aa).

Residues 70–75 (DGEQFK), 104–108 (GVIGD), 128–129 (TT), Lys141, Lys150, and 168–171 (CLHT) each bind NAD(+). Zn(2+) is bound by residues Glu183, His246, and His263.

It belongs to the sugar phosphate cyclases superfamily. Dehydroquinate synthase family. Co(2+) serves as cofactor. The cofactor is Zn(2+). It depends on NAD(+) as a cofactor.

It localises to the cytoplasm. The catalysed reaction is 7-phospho-2-dehydro-3-deoxy-D-arabino-heptonate = 3-dehydroquinate + phosphate. The protein operates within metabolic intermediate biosynthesis; chorismate biosynthesis; chorismate from D-erythrose 4-phosphate and phosphoenolpyruvate: step 2/7. Functionally, catalyzes the conversion of 3-deoxy-D-arabino-heptulosonate 7-phosphate (DAHP) to dehydroquinate (DHQ). The sequence is that of 3-dehydroquinate synthase from Shewanella baltica (strain OS195).